Here is a 267-residue protein sequence, read N- to C-terminus: Imidazole glycerol phosphate synthase subunit HisF (267 aa).

Residues Asp-22 and Asp-141 contribute to the active site.

This sequence belongs to the HisA/HisF family. As to quaternary structure, heterodimer of HisH and HisF.

It is found in the cytoplasm. The catalysed reaction is 5-[(5-phospho-1-deoxy-D-ribulos-1-ylimino)methylamino]-1-(5-phospho-beta-D-ribosyl)imidazole-4-carboxamide + L-glutamine = D-erythro-1-(imidazol-4-yl)glycerol 3-phosphate + 5-amino-1-(5-phospho-beta-D-ribosyl)imidazole-4-carboxamide + L-glutamate + H(+). It functions in the pathway amino-acid biosynthesis; L-histidine biosynthesis; L-histidine from 5-phospho-alpha-D-ribose 1-diphosphate: step 5/9. In terms of biological role, IGPS catalyzes the conversion of PRFAR and glutamine to IGP, AICAR and glutamate. The HisF subunit catalyzes the cyclization activity that produces IGP and AICAR from PRFAR using the ammonia provided by the HisH subunit. In Mycobacterium tuberculosis (strain ATCC 25177 / H37Ra), this protein is Imidazole glycerol phosphate synthase subunit HisF.